A 213-amino-acid chain; its full sequence is ATP-dependent Clp protease proteolytic subunit (213 aa).

Serine 114 acts as the Nucleophile in catalysis. Residue histidine 139 is part of the active site.

It belongs to the peptidase S14 family. As to quaternary structure, fourteen ClpP subunits assemble into 2 heptameric rings which stack back to back to give a disk-like structure with a central cavity, resembling the structure of eukaryotic proteasomes.

Its subcellular location is the cytoplasm. It carries out the reaction Hydrolysis of proteins to small peptides in the presence of ATP and magnesium. alpha-casein is the usual test substrate. In the absence of ATP, only oligopeptides shorter than five residues are hydrolyzed (such as succinyl-Leu-Tyr-|-NHMec, and Leu-Tyr-Leu-|-Tyr-Trp, in which cleavage of the -Tyr-|-Leu- and -Tyr-|-Trp bonds also occurs).. Functionally, cleaves peptides in various proteins in a process that requires ATP hydrolysis. Has a chymotrypsin-like activity. Plays a major role in the degradation of misfolded proteins. This Ectopseudomonas mendocina (strain ymp) (Pseudomonas mendocina) protein is ATP-dependent Clp protease proteolytic subunit.